Here is a 112-residue protein sequence, read N- to C-terminus: T cell receptor alpha variable 9-1 (112 aa).

The signal sequence occupies residues 1–20; the sequence is MNSSPGPAIALFLMFGGING. The 92-residue stretch at 21-112 folds into the Ig-like domain; sequence DSVVQTEGQV…DSAVYFCALS (92 aa). Asparagine 41 is a glycosylation site (N-linked (GlcNAc...) asparagine). Cysteine 42 and cysteine 109 are oxidised to a cystine.

As to quaternary structure, alpha-beta TR is a heterodimer composed of an alpha and beta chain; disulfide-linked. The alpha-beta TR is associated with the transmembrane signaling CD3 coreceptor proteins to form the TR-CD3 (TcR or TCR). The assembly of alpha-beta TR heterodimers with CD3 occurs in the endoplasmic reticulum where a single alpha-beta TR heterodimer associates with one CD3D-CD3E heterodimer, one CD3G-CD3E heterodimer and one CD247 homodimer forming a stable octameric structure. CD3D-CD3E and CD3G-CD3E heterodimers preferentially associate with TR alpha and TR beta chains, respectively. The association of the CD247 homodimer is the last step of TcR assembly in the endoplasmic reticulum and is required for transport to the cell surface.

It localises to the cell membrane. Functionally, v region of the variable domain of T cell receptor (TR) alpha chain that participates in the antigen recognition. Alpha-beta T cell receptors are antigen specific receptors which are essential to the immune response and are present on the cell surface of T lymphocytes. Recognize peptide-major histocompatibility (MH) (pMH) complexes that are displayed by antigen presenting cells (APC), a prerequisite for efficient T cell adaptive immunity against pathogens. Binding of alpha-beta TR to pMH complex initiates TR-CD3 clustering on the cell surface and intracellular activation of LCK that phosphorylates the ITAM motifs of CD3G, CD3D, CD3E and CD247 enabling the recruitment of ZAP70. In turn ZAP70 phosphorylates LAT, which recruits numerous signaling molecules to form the LAT signalosome. The LAT signalosome propagates signal branching to three major signaling pathways, the calcium, the mitogen-activated protein kinase (MAPK) kinase and the nuclear factor NF-kappa-B (NF-kB) pathways, leading to the mobilization of transcription factors that are critical for gene expression and essential for T cell growth and differentiation. The T cell repertoire is generated in the thymus, by V-(D)-J rearrangement. This repertoire is then shaped by intrathymic selection events to generate a peripheral T cell pool of self-MH restricted, non-autoaggressive T cells. Post-thymic interaction of alpha-beta TR with the pMH complexes shapes TR structural and functional avidity. This chain is T cell receptor alpha variable 9-1, found in Homo sapiens (Human).